A 393-amino-acid chain; its full sequence is Acetate kinase (393 aa).

Mg(2+) is bound at residue asparagine 6. ATP is bound at residue lysine 13. Arginine 87 contacts substrate. Aspartate 143 acts as the Proton donor/acceptor in catalysis. ATP contacts are provided by residues 203–207 (HLGNG), 278–280 (DMR), and 326–330 (GIGEN). Position 380 (glutamate 380) interacts with Mg(2+).

This sequence belongs to the acetokinase family. Homodimer. Requires Mg(2+) as cofactor. Mn(2+) serves as cofactor.

It localises to the cytoplasm. The catalysed reaction is acetate + ATP = acetyl phosphate + ADP. It participates in metabolic intermediate biosynthesis; acetyl-CoA biosynthesis; acetyl-CoA from acetate: step 1/2. Its function is as follows. Catalyzes the formation of acetyl phosphate from acetate and ATP. Can also catalyze the reverse reaction. This is Acetate kinase from Mycoplasma mycoides subsp. mycoides SC (strain CCUG 32753 / NCTC 10114 / PG1).